The sequence spans 764 residues: Thyrotropin receptor (764 aa).

A signal peptide spans 1–21 (MRPTPLLRLALLLVLPSSLWG). Residues 22–413 (ERCPSPPCEC…EFNPCEDIMG (392 aa)) lie on the Extracellular side of the membrane. An intrachain disulfide couples Cys31 to Cys41. One copy of the LRR 1 repeat lies at 51-74 (PPSTQTLKFIETHLKTIPSRAFSN). N-linked (GlcNAc...) asparagine glycosylation is found at Asn77 and Asn99. LRR repeat units lie at residues 125-150 (LPLL…IYST), 152-174 (VFFI…AFQG), 176-199 (SNET…AFNG), 201-223 (KLDA…AFAG), and 225-248 (YSGP…GLEH). N-linked (GlcNAc...) asparagine glycans are attached at residues Asn177 and Asn198. An N-linked (GlcNAc...) asparagine glycan is attached at Asn302. Tyr385 carries the sulfotyrosine modification. A helical transmembrane segment spans residues 414–441 (YKFLRIVVWFVSLLALLGNVFVLVILLT). Residues 442–450 (SHYKLTVPR) lie on the Cytoplasmic side of the membrane. Residues 451–473 (FLMCNLAFADFCMGLYLLLIASV) traverse the membrane as a helical segment. Over 474 to 494 (DLYTQSEYYNHAIDWQTGPGC) the chain is Extracellular. An intrachain disulfide couples Cys494 to Cys569. The helical transmembrane segment at 495-517 (NTAGFFTVFASELSVYTLTVITL) threads the bilayer. Over 518-537 (ERWYAITFAMHLDRKIRLWH) the chain is Cytoplasmic. Residues 538 to 560 (AYVIMLGGWVCCFLLALLPLVGI) traverse the membrane as a helical segment. The Extracellular portion of the chain corresponds to 561 to 580 (SSYAKVSICLPMDTETPLAL). The helical transmembrane segment at 581 to 602 (AYIILVLLLNIIAFIIVCACYV) threads the bilayer. The Cytoplasmic segment spans residues 603 to 625 (KIYITVRNPHYNPGDKDTRIAKR). A helical membrane pass occupies residues 626–649 (MAVLIFTDFMCMAPISFYALSALM). Over 650-660 (NKPLITVTNSK) the chain is Extracellular. The helical transmembrane segment at 661 to 682 (ILLVLFYPLNSCANPFLYAIFT) threads the bilayer. The Cytoplasmic portion of the chain corresponds to 683–764 (KAFQRDVFML…TSKEYKQTVL (82 aa)). A PDZ-binding motif is present at residues 762–764 (TVL).

It belongs to the G-protein coupled receptor 1 family. FSH/LSH/TSH subfamily. Interacts with heterodimer GPHA2:GPHB5; this interaction stimulates cAMP production. Interacts (via the PDZ-binding motif) with SCRIB; regulates TSHR trafficking and function. Glycosylated. In terms of processing, sulfated. Sulfation on Tyr-385 plays a role in thyrotropin receptor binding and activation.

The protein resides in the cell membrane. The protein localises to the basolateral cell membrane. Receptor for the thyroid-stimulating hormone (TSH) or thyrotropin. Also acts as a receptor for the heterodimeric glycoprotein hormone (GPHA2:GPHB5) or thyrostimulin. The activity of this receptor is mediated by G proteins which activate adenylate cyclase. Plays a central role in controlling thyroid cell metabolism. The sequence is that of Thyrotropin receptor (TSHR) from Ovis aries (Sheep).